The chain runs to 318 residues: Thiohydrolase aneE (318 aa).

This sequence belongs to the polyketide transferase af380 family.

The catalysed reaction is aculene D + L-prolyl-[peptidyl-carrier protein] = aculene B + holo-[peptidyl-carrier protein]. The enzyme catalyses aculene C + L-prolyl-[peptidyl-carrier protein] = aculene A + holo-[peptidyl-carrier protein]. It participates in secondary metabolite biosynthesis. Thiohydrolase; part of the gene cluster that mediates the biosynthesis of aculenes, a unique type of norsesquiterpenes that contain a nordaucane skeleton linked to an L-proline moiety and are of mixed biosynthetic origin. The pathway begins with the synthesis of dauca-4,7-diene by the terpene cyclase aneC using farnesyl pyrophosphate (FPP) as substrate. The cytochrome P450 monooxygenase aneF then performs the initial oxidation at C-12 of dauca-4,7-diene to yield asperaculane D. Asperaculane D is substrate of the cytochrome P450 monooxygenase aneD for C-10 hydroxylation to yield asperaculane E. The cytochrome P450 monooxygenase aneG then converts asperaculane E into aculene D via C-2 oxidation. The monomodular nonribosomal peptide synthtase aneB adenylates L-proline and the thiohydrolase aneE transfers this activated L-proline derivative to aculenes D and C to produce respectively aculenes B and A. The dioxygenase aneA converts aculene D into aculene C, and aculene B into aculene A by introducing the 5,6-alkene moiety. Asperculanes A, B, C and F, as well as 14-prolyl asperculane C, might be shunt products of the pathway. This Aspergillus aculeatus (strain ATCC 16872 / CBS 172.66 / WB 5094) protein is Thiohydrolase aneE.